A 2250-amino-acid chain; its full sequence is MPSRGSFRGRGRGSGSGFGSNTRFTGRRRGRGGGGGGGGVAYGIDRRPATSTNQANREDGTAATEKFEEVKVYDEIDEKIGFWRFESVRAEGEEKVGWLVNMHQTLVPSDVHPGGLAAVDYYFIQDDGGSFKVSIPYEPYFYLTCRGGTESIVEEWLLKRYEGIIIRIEREKKWDLSLPNHLLSAPPVFLKLFFHNTADLQTIRRDLLPLARSNSEKFTAVDAYADVVSAEAAANGHGDDENRAWGAEDDTKKKKDKEPSECIIEVREHDLAYHLRVAIDLNIRVGLWYTVTSRTGVITLERIPDRVKRADPVVMAYDIETTKQPLKFPDQQTDQIMMISYMIDGMGYLITNREIVGEDIDDFEYTPKDEYPGEFTVFNEPDEPAVIRRWFEHIRDSKPTVIATYNGDSFDFPFVDARAKIHGISMYEEIGFKPDIEEEYKSRSTMHMDCFRWVKRDSYLPQGSQGLKAVTTAKLGYNPIELDPELMTPYAIEQPQILAQYSVSDAVATYYLYMKYVHPFIFSLCNIIPLSPDEVLRKGTGTLCETLLMVEAYDAHIIMPNRHEDPHGVTYEGHLLASETYVGGHVEALEAGVFRSDIPTHFKIVPSAIQELIDDLDAALRFSLIEEGQVKLEDVENYDEVKQQIQTALETMRDEPNRFDNPLIYHLDVAAMYPNIMLSNRLQPDSVKEEADCAVCDYNRPDKKCDRRMEWAWRGEYFPAKRDEVNMVRYALEQETFPPKRPYDPKRRFVDLTPTEQSALLHKRLGDYSRKVYKKTHDTKIVTKTTIICQRENSFYIDTVRAFRDRRYEYKGLHKTWKKNLDKAFEEGGAVATVDEAKKMIVLYDSLQLAHKCILNSFYGYVMRKGARWYSMEMAGITCLTGATIIQMARQLVEQIGRPLELDTDGIWCMLPGVFPEDFNFKLKNGKKFGISYPCTMLNHLVHAQFTNDQYHELVNNDSGTYNVKKENSIFFELDGPYKAMILPSSKEEDKLLKKRYAVFNPDGSLAELKGFEVKRRGELQMIKIFQSQIFDKFLLGKTTEECYAAVATVADQWLDILQSKASSLHDDELVDLIAENRSMSKTLAEYAGQKSTSISTARRLAEFLGEQMVKDKGLSCRFIISAKPNGAPVTERAVPVAIFTAEEPVKRHYLRKWLKDNSLTDFDLRTILDWDYYTERLGSVIQKLITIPAALQKVPNPVPRIRHPDWLYKRIATKEDKFQQHKITDMFTKLKDMEDLGDGQKKVGPKLAVVRRRNRKEQEKESEVEEVPPEPEYDYAGYIRIMKKKWRKQRQEKARARKSGLRQDGTISSMLRTQTSSMNSKQWDVIQIASTNRPGEFKLWLAIDGTFQSVRLKVPREFYLNFKEDPEPQMLATDRYEAVEVVRTLPRGQPARHLYKLSVDEVLFMEGESHFSTLINNPNVDGAFELQVPLVVRALLSLGTSCALRSNILGGLNRGLDKGFDLVDLERSGNLSRRKYLNEGRGIRYHFLFHAVADQRHIIGLFSPDSTNASIYLVDRAKNRQQLPNPLKFYTDRVERAERGVFSYPDMLDFTTSYHSSESSAFKALGKDLQAINHGLNVIALCSPFEHSYYQAKAPVYSNFPFITYRLGKEEDPGLMWLLQTSRRMIGLYLRLSSWLKEQIQIASHFDVPIGNLGADIAVFLADIEFARRLKQQDMLIWWSSTPRPDLGGSEEDANSSEDLVSPHISNRGCYSSTVLEMEVSDLAINAVLQSALVNEMEGSGTGSLAFDSASHNLDEYAKGAVNTSVMLGDAVLSTQTFGVLKSMLRAWYADKARAHVKGDSLSPAEIVVDQFWRWISSSTSSMFEPALHRFLHGLMRKTFLQLLAEFKRLGTQVVYADFGRVFLLTSKPDAGSAFAFAKYLVAAANSQELFRHLIIDVAQFWNYLAWMDVANFGGVKVSPETAASREPPAKRFEISMDWNIQSFLPGTLQPVFERNVASFIFSLYSAKRSSSDGREPLRVIHSLNIDQPGTEATSTMNPTKEKEKKAASKSISQTLTRRLLSDIAAVKRQQAAVHLEPEEAYTLAFPDLPGARSKRINPTLELIKAITEVYSLASEHSIEVQILKRNLLDLIGVKEFSSDAAFNPPCESIEVPMVICKKCNAIRDVDLCRDPDRLPSVNPDSGEMLEPARKNWVCHKCDSEYDRFQIEQPLIEMVTKTITNYQIQDVICLKCSQTKSDNLAATCKCGGGFRTTSNRNELKTKLKMIKSVCDYHKLPFAGSYVEETLSRW.

3 disordered regions span residues 1 to 63 (MPSR…GTAA), 235 to 259 (NGHGDDENRAWGAEDDTKKKKDKEP), and 1990 to 2010 (PGTEATSTMNPTKEKEKKAAS). Gly residues predominate over residues 32–41 (GGGGGGGGVA). Residues 249–259 (DDTKKKKDKEP) are compositionally biased toward basic and acidic residues. Polar residues predominate over residues 1990 to 2000 (PGTEATSTMNP). Zn(2+) contacts are provided by Cys2118, Cys2121, Cys2156, and Cys2159. The CysA-type zinc finger occupies 2118 to 2159 (CKKCNAIRDVDLCRDPDRLPSVNPDSGEMLEPARKNWVCHKC). [4Fe-4S] cluster contacts are provided by Cys2190, Cys2193, Cys2205, and Cys2207. The CysB motif motif lies at 2190–2207 (CLKCSQTKSDNLAATCKC).

This sequence belongs to the DNA polymerase type-B family. As to quaternary structure, heterotetramer. Consists of 4 subunits: POL2, DPB2, DPB3 and DPB4. The cofactor is [4Fe-4S] cluster.

It localises to the nucleus. It carries out the reaction DNA(n) + a 2'-deoxyribonucleoside 5'-triphosphate = DNA(n+1) + diphosphate. Functionally, DNA polymerase II participates in chromosomal DNA replication. The chain is DNA polymerase epsilon catalytic subunit A (POL2) from Cryptococcus neoformans var. neoformans serotype D (strain JEC21 / ATCC MYA-565) (Filobasidiella neoformans).